The following is a 354-amino-acid chain: AT-rich binding protein (354 aa).

The segment at 31–54 (IVCHTCQEELQTQDKFWKHIQDEH) adopts a C2H2-type 1 zinc-finger fold. Disordered regions lie at residues 84–124 (LPLY…HDDQ) and 256–276 (EVQQHKESTNNSTTASASSAM). Basic and acidic residues-rich tracts occupy residues 89 to 100 (KVSENDQQRDDV) and 109 to 124 (QKEPKDYTEMRAHDDQ). A compositionally biased stretch (low complexity) spans 264-276 (TNNSTTASASSAM). C2H2-type zinc fingers lie at residues 285–309 (YICDFENCGLKFKYHSRLELHRSVH) and 315–338 (FACEICGASFKQSCNLSTHRKKKH).

Homooctamer. In terms of tissue distribution, fat body.

It is found in the nucleus. May be a transcription factor for genes having (A+T) stretches in their promoter and/or enhancer regions. Binds to AT rich DNA. The sequence is that of AT-rich binding protein from Sarcophaga peregrina (Flesh fly).